The chain runs to 396 residues: Elongation factor Tu 2 (396 aa).

The 197-residue stretch at 10 to 206 (KPHCNIGTIG…AVDAYIPQPE (197 aa)) folds into the tr-type G domain. A G1 region spans residues 19–26 (GHVDHGKT). 19–26 (GHVDHGKT) lines the GTP pocket. Position 26 (Thr26) interacts with Mg(2+). Residues 60-64 (GITIS) form a G2 region. Residues 81–84 (DCPG) form a G3 region. GTP-binding positions include 81-85 (DCPGH) and 136-139 (NKCD). Residues 136-139 (NKCD) are G4. The segment at 174-176 (SAL) is G5.

The protein belongs to the TRAFAC class translation factor GTPase superfamily. Classic translation factor GTPase family. EF-Tu/EF-1A subfamily. Monomer.

The protein localises to the cytoplasm. It catalyses the reaction GTP + H2O = GDP + phosphate + H(+). Its function is as follows. GTP hydrolase that promotes the GTP-dependent binding of aminoacyl-tRNA to the A-site of ribosomes during protein biosynthesis. The polypeptide is Elongation factor Tu 2 (Rhodopseudomonas palustris (strain BisB5)).